A 201-amino-acid polypeptide reads, in one-letter code: Alpha-1-acid glycoprotein 2 (201 aa).

The first 18 residues, 1-18, serve as a signal peptide directing secretion; sequence MALSWVLTVLSLLPLLEA. A Pyrrolidone carboxylic acid modification is found at Gln19. Disulfide bonds link Cys23-Cys165 and Cys90-Cys183. Asn33 carries N-linked (GlcNAc...) (complex) asparagine glycosylation. Asn56, Asn72, Asn93, and Asn103 each carry an N-linked (GlcNAc...) asparagine glycan.

This sequence belongs to the calycin superfamily. Lipocalin family. Post-translationally, N-glycosylated. N-glycan heterogeneity at Asn-33: Hex5HexNAc4 (minor), Hex6HexNAc5 (major) and dHex1Hex6HexNAc5 (minor). Expressed by the liver and secreted in plasma.

It is found in the secreted. Functions as a transport protein in the blood stream. Binds various hydrophobic ligands in the interior of its beta-barrel domain. Also binds synthetic drugs and influences their distribution and availability. Appears to function in modulating the activity of the immune system during the acute-phase reaction. The protein is Alpha-1-acid glycoprotein 2 (ORM2) of Homo sapiens (Human).